A 164-amino-acid polypeptide reads, in one-letter code: Urocortin-3 (164 aa).

The N-terminal stretch at 1 to 23 (MLMPTYFLLPLLLLLGGPRTSLS) is a signal peptide. Residues 24–121 (HKFYNTGPVF…PDKPKSDRGT (98 aa)) constitute a propeptide that is removed on maturation. A disordered region spans residues 58–120 (SFGHLPTQDP…YPDKPKSDRG (63 aa)). The span at 110-120 (LYPDKPKSDRG) shows a compositional bias: basic and acidic residues. Position 160 is an isoleucine amide (isoleucine 160).

The protein belongs to the sauvagine/corticotropin-releasing factor/urotensin I family. In terms of assembly, binds with high affinity to CRF receptors 2-alpha and 2-beta. As to expression, expressed in some areas of the brain including the hypothalamus, amygdala, and brainstem, but is not evident in the cerebellum, pituitary, or cerebral cortex; it is also expressed peripherally in small intestine and skin.

Its subcellular location is the secreted. Functionally, suppresses food intake, delays gastric emptying and decreases heat-induced edema. Might represent an endogenous ligand for maintaining homeostasis after stress. This is Urocortin-3 (Ucn3) from Mus musculus (Mouse).